A 144-amino-acid chain; its full sequence is MLMPKRTKFRRQMRGRMKGKAKGGKEIAFGEFGLQALEPAWINSRQIEAARIALTRYIKRGGKVWVKIFPDKPVTQKPAETRMGGGKGSPEFWAAVVKPGRILFEVAGVPKETAREAMRLASHKLPIKTKFVEREEMGGDANES.

It belongs to the universal ribosomal protein uL16 family. Part of the 50S ribosomal subunit.

Functionally, binds 23S rRNA and is also seen to make contacts with the A and possibly P site tRNAs. In Natranaerobius thermophilus (strain ATCC BAA-1301 / DSM 18059 / JW/NM-WN-LF), this protein is Large ribosomal subunit protein uL16.